The chain runs to 118 residues: Large ribosomal subunit protein uL24 (118 aa).

This sequence belongs to the universal ribosomal protein uL24 family. In terms of assembly, part of the 50S ribosomal subunit.

One of two assembly initiator proteins, it binds directly to the 5'-end of the 23S rRNA, where it nucleates assembly of the 50S subunit. In terms of biological role, one of the proteins that surrounds the polypeptide exit tunnel on the outside of the subunit. The polypeptide is Large ribosomal subunit protein uL24 (Prochlorococcus marinus (strain MIT 9303)).